We begin with the raw amino-acid sequence, 351 residues long: D-alanine--D-alanine ligase (351 aa).

Residues 146 to 340 enclose the ATP-grasp domain; sequence KEIMLYNNIK…YEDLCESIVL (195 aa). An ATP-binding site is contributed by 173-226; the sequence is AFDYPMVVKPNSGGSSIGTRIVHDEAELAESLKDAYRFDDEIIVEEFITGREFS. Residues Asp-295, Glu-307, and Asn-309 each contribute to the Mg(2+) site.

The protein belongs to the D-alanine--D-alanine ligase family. Mg(2+) is required as a cofactor. It depends on Mn(2+) as a cofactor.

It localises to the cytoplasm. The enzyme catalyses 2 D-alanine + ATP = D-alanyl-D-alanine + ADP + phosphate + H(+). The protein operates within cell wall biogenesis; peptidoglycan biosynthesis. In terms of biological role, cell wall formation. The polypeptide is D-alanine--D-alanine ligase (Pediococcus pentosaceus (strain ATCC 25745 / CCUG 21536 / LMG 10740 / 183-1w)).